A 107-amino-acid chain; its full sequence is Nucleoid-associated protein BT_0257 (107 aa).

This sequence belongs to the YbaB/EbfC family. In terms of assembly, homodimer.

It localises to the cytoplasm. The protein localises to the nucleoid. In terms of biological role, binds to DNA and alters its conformation. May be involved in regulation of gene expression, nucleoid organization and DNA protection. The protein is Nucleoid-associated protein BT_0257 of Bartonella tribocorum (strain CIP 105476 / IBS 506).